The sequence spans 357 residues: Actin, macronuclear (357 aa).

Belongs to the actin family. Post-translationally, met-1 may be removed after translation.

The protein resides in the cytoplasm. It is found in the cytoskeleton. The enzyme catalyses ATP + H2O = ADP + phosphate + H(+). Its function is as follows. Actins are highly conserved proteins that are involved in various types of cell motility and are ubiquitously expressed in all eukaryotic cells. The sequence is that of Actin, macronuclear from Oxytricha fallax.